Here is a 408-residue protein sequence, read N- to C-terminus: Aminoacylase-1 (408 aa).

H80 contributes to the Zn(2+) binding site. Residue D82 is part of the active site. A Zn(2+)-binding site is contributed by D113. E147 functions as the Proton acceptor in the catalytic mechanism. Zn(2+) contacts are provided by E148, E175, and H373.

This sequence belongs to the peptidase M20A family. In terms of assembly, homodimer. Interacts with SPHK1. Zn(2+) is required as a cofactor.

It localises to the cytoplasm. It catalyses the reaction an N-acyl-L-amino acid + H2O = an L-alpha-amino acid + a carboxylate. The catalysed reaction is N-acetyl-L-methionine + H2O = L-methionine + acetate. It carries out the reaction N-acetyl-L-glutamine + H2O = L-glutamine + acetate. Functionally, catalyzes the hydrolysis of N-acetylated amino acids to acetate and free amino acids. In Pongo abelii (Sumatran orangutan), this protein is Aminoacylase-1 (ACY1).